Consider the following 103-residue polypeptide: Spherulin-3A (103 aa).

The tract at residues Met1–Lys13 is N-terminal arm. 2 consecutive Beta/gamma crystallin 'Greek key' domains span residues Gly14 to Pro55 and Thr57 to Thr99.

Belongs to the beta/gamma-crystallin family.

It is found in the cytoplasm. Functionally, structural protein. The sequence is that of Spherulin-3A from Physarum polycephalum (Slime mold).